Here is an 83-residue protein sequence, read N- to C-terminus: MNIILFYFMPILISLPGLLASGTYPNDVYGLTYDCGKLGENEHCLKICKIHGVEYGYCYGWRCWCDKLSDKNKLFWDVYKEHC.

A signal peptide spans 1–21 (MNIILFYFMPILISLPGLLAS). The LCN-type CS-alpha/beta domain occupies 22 to 83 (GTYPNDVYGL…LFWDVYKEHC (62 aa)). 3 disulfide bridges follow: Cys-35/Cys-58, Cys-44/Cys-63, and Cys-48/Cys-65.

It belongs to the long (3 C-C) scorpion toxin superfamily. Monomer (edited version) and heterodimer (non-edited version) of this alpha chain and a beta chain (AC P0CI43). As to expression, expressed by the venom gland.

It is found in the secreted. In terms of biological role, the heterodimer non-edited LVP1 induces lipolysis in rat adipocytes. Induction of lipolysis by LVP1 appears to be mediated through the beta-2 adrenergic receptor pathway (ADRB2). The edited BmKBTx-like, similar to beta-toxins, may modulate voltage-gated sodium channels (Nav) and may block voltage-gated potassium channels (Kv). The polypeptide is Lipolysis-activating peptide 1-alpha chain (Lychas mucronatus (Chinese swimming scorpion)).